A 431-amino-acid polypeptide reads, in one-letter code: Large envelope protein (431 aa).

The N-myristoyl glycine; by host moiety is linked to residue glycine 2. Residues 2 to 148 (GNNIKVTFNP…PPLRDTHPHL (147 aa)) are pre-S1. The segment at 2–207 (GNNIKVTFNP…PSTTGDPALS (206 aa)) is pre-S. The Virion surface; in external conformation portion of the chain corresponds to 2-214 (GNNIKVTFNP…ALSPEMSPSS (213 aa)). Residues 2–286 (GNNIKVTFNP…NGFRWMYLRR (285 aa)) are Intravirion; in internal conformation-facing. Residue asparagine 3 is glycosylated (N-linked (GlcNAc...) asparagine). The interval 115–147 (IPRGLVPPQTPTNRDQGRKPTPPTPPLRDTHPH) is disordered. A pre-S2 region spans residues 149–207 (TMKNQTFHLQGFVDGLRDLTTTERQHNAYRDPFTTLSPAVPTVSTILSPPSTTGDPALS). A helical membrane pass occupies residues 215-235 (LLGLLAGLQVVYFLWTKILTI). At 236 to 286 (AQNLDWWCTSLSFPGGIPECTGQNSQFQTCKHLPTSCPPTCNGFRWMYLRR) the chain is on the intravirion; in external conformation side. Residues 287 to 307 (FIIYLLVLLLCLIFLLVLLDW) traverse the membrane as a helical segment. Topologically, residues 308–379 (KGLIPVCPLQ…WALARLSWLN (72 aa)) are virion surface. Asparagine 351 carries an N-linked (GlcNAc...) asparagine; by host glycan. A helical membrane pass occupies residues 380-400 (LLVPLLQWLGGISLIAWFLLI). Over 401 to 406 (WMIWFW) the chain is Intravirion. Residues 407-429 (GPALLSILPPFIPIFVLFFLIWV) form a helical membrane-spanning segment. Topologically, residues 430-431 (YI) are virion surface.

It belongs to the orthohepadnavirus major surface antigen family. As to quaternary structure, in its internal form (Li-HBsAg), interacts with the capsid protein and with the isoform S. Interacts with host chaperone CANX. Associates with host chaperone CANX through its pre-S2 N glycan; this association may be essential for isoform M proper secretion. In terms of assembly, interacts with isoform L. Interacts with the antigens of satellite virus HDV (HDVAgs); this interaction is required for encapsidation of HDV genomic RNA. Isoform M is N-terminally acetylated by host at a ratio of 90%, and N-glycosylated by host at the pre-S2 region. Post-translationally, myristoylated.

It localises to the virion membrane. In terms of biological role, the large envelope protein exists in two topological conformations, one which is termed 'external' or Le-HBsAg and the other 'internal' or Li-HBsAg. In its external conformation the protein attaches the virus to cell receptors and thereby initiating infection. This interaction determines the species specificity and liver tropism. This attachment induces virion internalization predominantly through caveolin-mediated endocytosis. The large envelope protein also assures fusion between virion membrane and endosomal membrane. In its internal conformation the protein plays a role in virion morphogenesis and mediates the contact with the nucleocapsid like a matrix protein. Functionally, the middle envelope protein plays an important role in the budding of the virion. It is involved in the induction of budding in a nucleocapsid independent way. In this process the majority of envelope proteins bud to form subviral lipoprotein particles of 22 nm of diameter that do not contain a nucleocapsid. In Marmota monax (Woodchuck), this protein is Large envelope protein.